Reading from the N-terminus, the 496-residue chain is Latent membrane protein 2 (496 aa).

Positions 1–108 are disordered; sequence MGSLEMVPMG…PPYSPRDDSS (108 aa). The Cytoplasmic portion of the chain corresponds to 1-123; that stretch reads MGSLEMVPMG…EAGRGSMNPV (123 aa). Over residues 27–41 the composition is skewed to polar residues; that stretch reads NNSQYPSASGSSGNT. A PPxY motif motif is present at residues 97-101; it reads PPPPY. Position 112 is a phosphotyrosine; by host (tyrosine 112). A helical transmembrane segment spans residues 124–144; it reads CLPVIVAPYLFWLAAIAASCF. Over 145 to 147 the chain is Extracellular; sequence TAS. A helical membrane pass occupies residues 148-168; sequence VSTVVTATGLALSLLLLAAVA. At 169-177 the chain is on the cytoplasmic side; sequence SSYAAAQRK. The helical transmembrane segment at 178-197 threads the bilayer; the sequence is LLTPVTVLTAVVFFAICLTW. Topologically, residues 198–210 are extracellular; it reads RIEDPPFNSLLFA. Residues 211 to 231 traverse the membrane as a helical segment; it reads LLAAAGGLQGIYVLVMLVLLI. The Cytoplasmic portion of the chain corresponds to 232-240; sequence LAYRRRWRR. Residues 241-261 form a helical membrane-spanning segment; sequence LTVCGGIMFLACVLVLIVDAV. Residues 262–266 are Extracellular-facing; sequence LQLSP. Residues 267 to 287 form a helical membrane-spanning segment; the sequence is LLGAVTVVSMTLLLLAFVLWL. Topologically, residues 288-295 are cytoplasmic; the sequence is SSPGGLGT. The chain crosses the membrane as a helical span at residues 296–316; the sequence is LGAALLTLAAALALLASLILG. A topological domain (extracellular) is located at residue threonine 317. The chain crosses the membrane as a helical span at residues 318 to 338; that stretch reads LNLTTMFLLMLLWTLVVLLIC. Topologically, residues 339 to 353 are cytoplasmic; it reads SSCSSCPLTKILLAR. A helical membrane pass occupies residues 354–374; it reads LFLYALALLLLASALIAGGSI. Over 375-387 the chain is Extracellular; the sequence is LQTNFKSLSSTEF. Residues 388 to 408 form a helical membrane-spanning segment; sequence IPNLFCMLLLIVAGILFILAI. Topologically, residues 409–421 are cytoplasmic; the sequence is LTEWGSGNRTYGP. A helical transmembrane segment spans residues 422–442; the sequence is VFMCLGGLLTMVAGAVWLTVM. Residues 443-448 lie on the Extracellular side of the membrane; sequence TNTLLS. Residues 449–469 traverse the membrane as a helical segment; it reads AWILTAGFLIFLIGFALFGVI. The Cytoplasmic segment spans residues 470-496; the sequence is RCCRYCCYYCLTLESEERPPTPYRNTV.

This sequence belongs to the herpesviridae LMP-2 family. The cytoplasmic N-terminal domain interacts with human SRC family protein tyrosine kinases SYK and LYN. Binds human ITCH, WWP2 and NEDD4L. In terms of processing, phosphorylated on cytoplasmic N-terminal tyrosine residues, possibly by human LYN. Post-translationally, can be ubiquitinated by human ITCH and WWP2 on the N-terminus in a lysine-independent manner.

It localises to the host cell membrane. The protein resides in the host endomembrane system. Its subcellular location is the host cytoplasm. The protein localises to the host perinuclear region. Maintains EBV latent infection of B-lymphocyte, by preventing lytic reactivation of the virus in response to surface immunoglobulin (sIg) cross-linking. Acts like a dominant negative inhibitor of the sIg-associated protein tyrosine kinases, LYN and SYK. Also blocks translocation of the B-cell antigen receptor (BCR) into lipid rafts, preventing the subsequent signaling and accelerated internalization of the BCR upon BCR cross-linking. Serves as a molecular scaffold to recruit SYK, LYN and E3 protein-ubiquitin ligases, such as ITCH and NEDD4L, leading to ubiquitination and potential degradation of both tyrosines kinases. Possesses a constitutive signaling activity in non-transformed cells, inducing bypass of normal B lymphocyte developmental checkpoints allowing immunoglobulin-negative cells to colonize peripheral lymphoid organs. In terms of biological role, may be a negative regulator of isoform LMP2A. This chain is Latent membrane protein 2 (LMP2), found in Homo sapiens (Human).